We begin with the raw amino-acid sequence, 177 residues long: PLAC8-like protein 1 (177 aa).

This sequence belongs to the cornifelin family.

The protein is PLAC8-like protein 1 (Plac8l1) of Mus musculus (Mouse).